Reading from the N-terminus, the 387-residue chain is Cysteine desulfurase (387 aa).

Pyridoxal 5'-phosphate-binding positions include 72 to 73, N152, Q180, and 200 to 202; these read GT and SAH. Residue K203 is modified to N6-(pyridoxal phosphate)lysine. T238 contacts pyridoxal 5'-phosphate. C326 (cysteine persulfide intermediate) is an active-site residue. C326 contributes to the [2Fe-2S] cluster binding site.

Belongs to the class-V pyridoxal-phosphate-dependent aminotransferase family. NifS/IscS subfamily. As to quaternary structure, homodimer. Pyridoxal 5'-phosphate serves as cofactor.

It catalyses the reaction (sulfur carrier)-H + L-cysteine = (sulfur carrier)-SH + L-alanine. Its function is as follows. Catalyzes the removal of elemental sulfur atoms from cysteine to produce alanine. Seems to participate in the biosynthesis of the nitrogenase metalloclusters by providing the inorganic sulfur required for the Fe-S core formation. The polypeptide is Cysteine desulfurase (Sinorhizobium fredii (strain NBRC 101917 / NGR234)).